The sequence spans 240 residues: Uridylate kinase (240 aa).

12-15 (KLSG) contributes to the ATP binding site. Position 54 (glycine 54) interacts with UMP. Residues glycine 55 and arginine 59 each contribute to the ATP site. UMP contacts are provided by residues aspartate 74 and 135 to 142 (TGNPFFTT). Positions 162, 168, and 171 each coordinate ATP.

It belongs to the UMP kinase family. In terms of assembly, homohexamer.

The protein resides in the cytoplasm. It catalyses the reaction UMP + ATP = UDP + ADP. The protein operates within pyrimidine metabolism; CTP biosynthesis via de novo pathway; UDP from UMP (UMPK route): step 1/1. With respect to regulation, inhibited by UTP. Functionally, catalyzes the reversible phosphorylation of UMP to UDP. The protein is Uridylate kinase of Xanthomonas axonopodis pv. citri (strain 306).